The chain runs to 130 residues: Small ribosomal subunit protein uS11 (130 aa).

Belongs to the universal ribosomal protein uS11 family. Part of the 30S ribosomal subunit. Interacts with proteins S7 and S18. Binds to IF-3.

Its function is as follows. Located on the platform of the 30S subunit, it bridges several disparate RNA helices of the 16S rRNA. Forms part of the Shine-Dalgarno cleft in the 70S ribosome. This Phytoplasma mali (strain AT) protein is Small ribosomal subunit protein uS11.